The sequence spans 930 residues: F-box only protein 11 (930 aa).

The tract at residues 1-150 (MNSVRAANRR…RVSGKSQDLS (150 aa)) is disordered. Residues 7–16 (ANRRPRRVSR) show a composition bias toward basic residues. The span at 17–27 (PRPVQQQQQQP) shows a compositional bias: low complexity. The span at 28-73 (PQQPPPQPPQQQPPPQPPQQPPQQQPPPPPQQQPPPPPPPPPPPPQ) shows a compositional bias: pro residues. Over residues 117–132 (PTKSSMEGASTSTTEN) the composition is skewed to polar residues. In terms of domain architecture, F-box spans 156-202 (QYLQEKLPDEVVLKIFSYLLEQDLCRAACVCKRFSELANDPILWKRL). PbH1 repeat units lie at residues 398-420 (GACP…YITD), 421-443 (HAQG…WVKN), 444-466 (HGNP…FTFD), 467-489 (HGMG…EVKA), 490-512 (YANP…YVHE), 513-535 (KGRG…WITS), 536-558 (NSDP…YIFG), 559-581 (DGRG…QIRT), 582-604 (NSCP…YVHE), 605-627 (KGQG…WVTT), 628-650 (GSTP…YFYD), 651-673 (NGHG…QIRT), 674-696 (GSNP…LVYN), 697-719 (SGLG…WIKT), 720-742 (DSNP…CIFN), 743-765 (GGRG…LIST), 766-788 (NSHP…EITN), 789-811 (HATA…FLAS), and 812-833 (GVNV…EKAV). The segment at 836-907 (GQCLYKISSY…LSNPCTLAGE (72 aa)) adopts a UBR-type zinc-finger fold.

In terms of assembly, component of the SCF(FBXO11) complex consisting of CUL1, RBX1, SKP1 and FBXO11. Interacts with CIITA. At 9.5 dpc and 10.5 dpc, expression is restricted to developing heart tissue. By 11.5 dpc and 12.5 dpc, detected in liver and subsequently in muscle by 13.5 dpc. At 14.5 dpc, still detected in heart, liver and muscle and also in the developing secondary palate including the nasal, medial and oral epithelia of the palatal shelves. At 15.5 dpc and 16.5 dpc, expressed in lung, kidney, heart, liver, muscle and adrenal gland. At this time, fusion of the palate shelves has occurred, with expression confined to the nasal and oral epithelia. At 17.5 dpc, expression in the lung is confined to bronchial epithelial cells and is evident in bone marrow, skin, tissue macrophages, osteoblasts, kidney, liver and spleen. At 18.5 dpc, expressed in bone marrow, liver, kidney and muscle but decreases in heart and lung. At this time, first detected in the middle ear epithelium. At the newborn stage, expression is strong in the middle ear where it is confined to mucin-secreting cells, as well as persisting in bone marrow, kidney and liver. Middle ear expression persists in postnatal head tissue at 4 and 13 days after birth and has declined by 21 days after birth. In the adult, expression is seen in alveolar macrophages of the lung, glomeruli and collecting tubules of the kidney, midbrain, heart and muscle.

It is found in the nucleus. The protein localises to the chromosome. It functions in the pathway protein modification; protein ubiquitination. Its function is as follows. Substrate recognition component of a SCF (SKP1-CUL1-F-box protein) E3 ubiquitin-protein ligase complex which mediates the ubiquitination and subsequent proteasomal degradation of target proteins, such as DTL/CDT2, BCL6, SNAI1 and PRDM1/BLIMP1. The SCF(FBXO11) complex mediates ubiquitination and degradation of BCL6, thereby playing a role in the germinal center B-cells terminal differentiation toward memory B-cells and plasma cells. The SCF(FBXO11) complex also mediates ubiquitination and degradation of DTL, an important step for the regulation of TGF-beta signaling, cell migration and the timing of the cell-cycle progression and exit. The SCF(FBXO11) complex also catalyzes ubiquitination and degradation of GSK3B-phosphorylated SNAI1. Binds to and neddylates phosphorylated p53/TP53, inhibiting its transcriptional activity. Plays a role in the regulatiom of erythropoiesis but not myelopoiesis or megakaryopoiesis. Mechanistically, activates erythroid genes by mediating the degradation of BAHD1, a heterochromatin-associated protein that recruits corepressors to H3K27me3 marks. Participates in macrophage cell death and inflammation in response to bacterial toxins by regulating the expression of complement 5a receptor 1/C5AR1 and IL-1beta. Acts as a critical regulator to determine the level of MHC-II by mediating the recognition of degron at the P/S/T domain of CIITA leading to its ubiquitination and subsequent degradation via the proteasome. Participates in the antiviral repsonse by initiating the activation of TBK1-IRF3-IFN-I axis. Mediates the 'Lys-63'-linked ubiquitination of TRAF3 to strengthen the interaction between TRAF3 and TBK1. In Mus musculus (Mouse), this protein is F-box only protein 11.